The sequence spans 380 residues: Cytochrome b (380 aa).

4 helical membrane-spanning segments follow: residues Phe34 to Met54, Trp78 to Ile99, Trp114 to Leu134, and Phe179 to Val199. Residues His84 and His98 each coordinate heme b. His183 contacts heme b. Residue His202 participates in a ubiquinone binding. The next 4 membrane-spanning stretches (helical) occupy residues Thr227–Phe247, Leu289–Asn309, Leu321–Ser341, and Phe348–Leu369.

It belongs to the cytochrome b family. The main subunits of complex b-c1 are: cytochrome b, cytochrome c1 and the Rieske protein. It depends on heme b as a cofactor.

The protein localises to the mitochondrion inner membrane. Its function is as follows. Component of the ubiquinol-cytochrome c reductase complex (complex III or cytochrome b-c1 complex) that is part of the mitochondrial respiratory chain. The b-c1 complex mediates electron transfer from ubiquinol to cytochrome c. Contributes to the generation of a proton gradient across the mitochondrial membrane that is then used for ATP synthesis. This Paracentrotus lividus (Common sea urchin) protein is Cytochrome b (MT-CYB).